Reading from the N-terminus, the 306-residue chain is Acetyl-coenzyme A carboxylase carboxyl transferase subunit beta (306 aa).

The CoA carboxyltransferase N-terminal domain maps to 25–294; sequence VWTKCDSCGQ…PSPDAPREAV (270 aa). The Zn(2+) site is built by Cys29, Cys32, Cys48, and Cys51. The C4-type zinc-finger motif lies at 29 to 51; sequence CDSCGQVLYRAELERNLEVCPKC. Positions 286-306 are disordered; sequence SPDAPREAVVVPPVPDQDHEA.

Belongs to the AccD/PCCB family. Acetyl-CoA carboxylase is a heterohexamer composed of biotin carboxyl carrier protein (AccB), biotin carboxylase (AccC) and two subunits each of ACCase subunit alpha (AccA) and ACCase subunit beta (AccD). Requires Zn(2+) as cofactor.

The protein resides in the cytoplasm. It catalyses the reaction N(6)-carboxybiotinyl-L-lysyl-[protein] + acetyl-CoA = N(6)-biotinyl-L-lysyl-[protein] + malonyl-CoA. The protein operates within lipid metabolism; malonyl-CoA biosynthesis; malonyl-CoA from acetyl-CoA: step 1/1. In terms of biological role, component of the acetyl coenzyme A carboxylase (ACC) complex. Biotin carboxylase (BC) catalyzes the carboxylation of biotin on its carrier protein (BCCP) and then the CO(2) group is transferred by the transcarboxylase to acetyl-CoA to form malonyl-CoA. The sequence is that of Acetyl-coenzyme A carboxylase carboxyl transferase subunit beta from Cronobacter sakazakii (strain ATCC BAA-894) (Enterobacter sakazakii).